Consider the following 386-residue polypeptide: Succinate--CoA ligase [ADP-forming] subunit beta (386 aa).

The 236-residue stretch at 9–244 (KEILRKYGVP…HDEEDPLETR (236 aa)) folds into the ATP-grasp domain. ATP-binding positions include Lys-46, 53-55 (GRG), Glu-99, Cys-102, and Glu-107. 2 residues coordinate Mg(2+): Asn-199 and Asp-213. Substrate-binding positions include Asn-264 and 321-323 (GIM).

This sequence belongs to the succinate/malate CoA ligase beta subunit family. As to quaternary structure, heterotetramer of two alpha and two beta subunits. Mg(2+) is required as a cofactor.

It carries out the reaction succinate + ATP + CoA = succinyl-CoA + ADP + phosphate. The enzyme catalyses GTP + succinate + CoA = succinyl-CoA + GDP + phosphate. It functions in the pathway carbohydrate metabolism; tricarboxylic acid cycle; succinate from succinyl-CoA (ligase route): step 1/1. Succinyl-CoA synthetase functions in the citric acid cycle (TCA), coupling the hydrolysis of succinyl-CoA to the synthesis of either ATP or GTP and thus represents the only step of substrate-level phosphorylation in the TCA. The beta subunit provides nucleotide specificity of the enzyme and binds the substrate succinate, while the binding sites for coenzyme A and phosphate are found in the alpha subunit. The chain is Succinate--CoA ligase [ADP-forming] subunit beta from Rickettsia massiliae (strain Mtu5).